Consider the following 92-residue polypeptide: Alpha-conotoxin-like Mi20.2 (92 aa).

Residues 1-24 (MPKLEMMLLVLLILPLSSFSAAGE) form the signal peptide. A propeptide spanning residues 25 to 45 (QVVQGDQRSDGLARYLQRGGR) is cleaved from the precursor. Glutamate 49 is subject to 4-carboxyglutamate. Proline 55 carries the 4-hydroxyproline modification. 4 disulfide bridges follow: cysteine 63–cysteine 72, cysteine 68–cysteine 80, cysteine 73–cysteine 90, and cysteine 78–cysteine 92.

Belongs to the conotoxin D superfamily. In terms of assembly, hetero-, homo- or pseudo-homodimer (identical sequence, different post-translational modifications). As to expression, expressed by the venom duct.

It localises to the secreted. Functionally, alpha-conotoxins act on postsynaptic membranes, they bind to the nicotinic acetylcholine receptors (nAChR) and thus inhibit them. Through its two C-terminal domains, this homodimeric protein would bind to two nAChR allosteric sites, located outside the nAChR C-loop of the principal binding face and at the adjacent binding interface in a clockwise direction. This toxin specifically blocks mammalian neuronal nAChR of the alpha-7/CHRNA7, alpha-3-beta-2/CHRNA3-CHRNB2 and alpha-4-beta-2/CHRNA4-CHRNB2 subtypes. The protein is Alpha-conotoxin-like Mi20.2 of Conus miles (Soldier cone).